Consider the following 786-residue polypeptide: MGKVEFSGKRYVIDGEPVTIAGGTLQFFRVPADAWKDRLLKMREAGLNTVDTYVAWNWHEPEKGSFDFKGETHPQRNLVGFLELADELGFYVIIRPGPYICGEWRNGGIPDWLIDEHPEILAKGPNGPLPRDIYYPPITYLHPTYLEAVGEWYNAVFPVIRKYLYTNGGPIISVSIDDEPSYWETIFQPFLTDYNEIITKPGGLWEKWLEQNYTLEDLRRRYKGDFKDYSEIKVPTSFSEPLPKLIDWHHFKLWMINEYVRWIYERMAREFDVPISILDPYLLQVAWRHFFTYMREHNLKIHVWTEFWYSFYRSSDFKEDKLGHIYYKTGIYRYHVRKAGTPPLSIETQSSLAHTIDPTEAELLYSILPPLGIPNINYYLFVGGENPEGYESHNGITWDVYSPVGLDGSERPHFGVIKALSETMTSAEGLADAELRPKVAVGLYEPYEALNLWGYEGLEESTDLNEYLLGERGLFTLLAMSNTPFDAVDLEDVTLDELLSYDQLWVYSLDFMSREVQDKLVEFVARGGNLVILPMLPRYDENLEPYSSLKDFLGVEVEREKARRNPRLIQFLSVSAEGIDRMLVRNTVRGVRGGEPIAFLGEKPVGAFVRKGGGSAVVLGFRLQYYTSHHDLHRKFVWKLKELQGVREDFEVTNPDMIVLPMEGKGYAYLAVTNPRGHPIKGRISYRGLEVPVLLDGIELKRRGTLYLPFGVRKGDVEVAYATATLVMWEGDVLTFRNHLSGHSEIALKGVESVKVSGGKIVDGSDGEVLRIVIEHPGEYFEVELL.

Substrate is bound by residues Tyr-53, 102-103 (GE), 178-179 (DE), Glu-306, Glu-347, and Tyr-379. Residue Glu-179 is the Proton donor of the active site. Glu-347 functions as the Nucleophile in the catalytic mechanism.

Belongs to the glycosyl hydrolase 35 family. Homodimer.

Its subcellular location is the cytoplasm. The catalysed reaction is beta-D-glucosaminyl-(1-&gt;4)-N-acetyl-D-glucosamine + H2O = D-glucosamine + N-acetyl-D-glucosamine. The protein operates within glycan degradation; chitin degradation. Functionally, exo-type enzyme that specifically cleaves the non-reducing terminal glycosidic bond of chitooligosaccharides. Catalyzes the hydrolysis of GlcN-GlcNAc to glucosamine (GlcN) and N-acetylglucosamine (GlcNAc). Involved in chitin degradation. Can also hydrolyze reduced chitobiose (GlcN2OH) and chitooligosaccharides of various chain lengths. The polypeptide is Exo-beta-D-glucosaminidase (Thermococcus kodakarensis (strain ATCC BAA-918 / JCM 12380 / KOD1) (Pyrococcus kodakaraensis (strain KOD1))).